Consider the following 812-residue polypeptide: Probable inorganic carbon transporter subunit DabA (812 aa).

The Zn(2+) site is built by cysteine 337, aspartate 339, histidine 499, and cysteine 514.

Belongs to the inorganic carbon transporter (TC 9.A.2) DabA family. In terms of assembly, forms a complex with DabB. Requires Zn(2+) as cofactor.

The protein localises to the cell inner membrane. Part of an energy-coupled inorganic carbon pump. The protein is Probable inorganic carbon transporter subunit DabA of Xanthomonas oryzae pv. oryzae (strain MAFF 311018).